The chain runs to 202 residues: Dual-action ribosomal maturation protein DarP (202 aa).

The segment covering 1–13 (MPPMTRNTRNNPN) has biased composition (low complexity). A disordered region spans residues 1 to 39 (MPPMTRNTRNNPNGRFPGAFAPEDEDDLPKSKSQRKRDM).

This sequence belongs to the DarP family.

It is found in the cytoplasm. Functionally, member of a network of 50S ribosomal subunit biogenesis factors which assembles along the 30S-50S interface, preventing incorrect 23S rRNA structures from forming. Promotes peptidyl transferase center (PTC) maturation. This Cupriavidus metallidurans (strain ATCC 43123 / DSM 2839 / NBRC 102507 / CH34) (Ralstonia metallidurans) protein is Dual-action ribosomal maturation protein DarP.